The chain runs to 83 residues: Large ribosomal subunit protein eL14 (83 aa).

Belongs to the eukaryotic ribosomal protein eL14 family.

The sequence is that of Large ribosomal subunit protein eL14 from Thermococcus gammatolerans (strain DSM 15229 / JCM 11827 / EJ3).